A 184-amino-acid polypeptide reads, in one-letter code: ADP-ribosylation factor-like protein 8b (184 aa).

Positions 1-18 (MGLWDALLNWLRSLFFKQ) form an intramembrane region, note=Mediates targeting to membranes. GTP-binding positions include 29 to 34 (NAGKTS), 48 to 51 (MIPT), 70 to 74 (DLGGQ), and 129 to 132 (NKID).

This sequence belongs to the small GTPase superfamily. Arf family. Interacts with tubulin.

Its subcellular location is the late endosome membrane. The protein resides in the lysosome membrane. It localises to the cytoplasm. The protein localises to the cytoskeleton. It is found in the spindle. Its function is as follows. May play a role in lysosome motility. May play a role in chromosome segregation. (Microbial infection) Component of tomato mosaic virus (ToMV) RNA replication complexes. Required for tobamovirus multiplication, especially for efficient negative-strand RNA synthesis and viral RNA capping. In Arabidopsis thaliana (Mouse-ear cress), this protein is ADP-ribosylation factor-like protein 8b.